The following is a 308-amino-acid chain: tRNA dimethylallyltransferase (308 aa).

Position 10-17 (10-17 (GPTGVGKT)) interacts with ATP. 12–17 (TGVGKT) is a substrate binding site. The interval 35-38 (DSRQ) is interaction with substrate tRNA.

It belongs to the IPP transferase family. Monomer. Mg(2+) is required as a cofactor.

The catalysed reaction is adenosine(37) in tRNA + dimethylallyl diphosphate = N(6)-dimethylallyladenosine(37) in tRNA + diphosphate. In terms of biological role, catalyzes the transfer of a dimethylallyl group onto the adenine at position 37 in tRNAs that read codons beginning with uridine, leading to the formation of N6-(dimethylallyl)adenosine (i(6)A). The protein is tRNA dimethylallyltransferase of Fervidobacterium nodosum (strain ATCC 35602 / DSM 5306 / Rt17-B1).